The primary structure comprises 105 residues: Putative toxin MazF8 (105 aa).

In terms of assembly, forms a complex with cognate antitoxin MazE8.

Its function is as follows. Putative toxic component of a type II toxin-antitoxin (TA) system. Acts as an endoribonuclease. Neutralized by coexpression with cognate antitoxin MazE8. The sequence is that of Putative toxin MazF8 (mazF8) from Mycobacterium tuberculosis (strain CDC 1551 / Oshkosh).